We begin with the raw amino-acid sequence, 173 residues long: NADH-ubiquinone oxidoreductase chain 6 (173 aa).

The next 4 helical transmembrane spans lie at 24-44, 47-67, 81-101, and 142-162; these read AMGLMLLIQTFLTSLLTGMFV, FWFSYVLFLIFMGGMLVLFIY, MKLFFLSLSMILMFIVFSFFF, and LITLLLINYLFLTLLVTVKIT.

This sequence belongs to the complex I subunit 6 family.

The protein localises to the mitochondrion membrane. It carries out the reaction a ubiquinone + NADH + 5 H(+)(in) = a ubiquinol + NAD(+) + 4 H(+)(out). Functionally, core subunit of the mitochondrial membrane respiratory chain NADH dehydrogenase (Complex I) that is believed to belong to the minimal assembly required for catalysis. Complex I functions in the transfer of electrons from NADH to the respiratory chain. The immediate electron acceptor for the enzyme is believed to be ubiquinone. The polypeptide is NADH-ubiquinone oxidoreductase chain 6 (Aedes aegypti (Yellowfever mosquito)).